The sequence spans 330 residues: Free fatty acid receptor 2 (330 aa).

Over 1–8 (MTPDWHSS) the chain is Extracellular. A helical transmembrane segment spans residues 9–29 (LILTAYILIFLTGLPANLLAL). At 30–43 (RAFVSRVRQPQPAP) the chain is on the cytoplasmic side. The helical transmembrane segment at 44 to 64 (VHILLLNLTLADLLLLLLLPF) threads the bilayer. At 65–79 (RIVEAASNFRWYLPK) the chain is on the extracellular side. A helical transmembrane segment spans residues 80–100 (IVCALTGFGFYSSIYCSTWLL). At 101–126 (AGISIERYLGVAFPVQYKLSRRPLYG) the chain is on the cytoplasmic side. A helical membrane pass occupies residues 127 to 147 (VIAALVAWIMSFGHCTIVIIV). Residues 148-184 (QYLNSTEQVGTENQITCYENFTQAQLDVVLPVRLELC) lie on the Extracellular side of the membrane. Asparagine 151 and asparagine 167 each carry an N-linked (GlcNAc...) asparagine glycan. A helical membrane pass occupies residues 185–205 (LVLFFVPMTVTIFCYWRFVWI). At 206–219 (MLTQPHVGAQRRRR) the chain is on the cytoplasmic side. The chain crosses the membrane as a helical span at residues 220 to 240 (AVGLAVVTLLNFLVCFGPYNM). Residues 241–255 (SHLVGFHLRQSPSWR) lie on the Extracellular side of the membrane. Residues 256 to 276 (VEAVVFSSLNASLDPLLFYFS) traverse the membrane as a helical segment. Over 277–330 (SSVVRRAFGKGLLLLRNPGSSMLGRGAEETVEGTKTDRGGSQTEGAQSSDFVTE) the chain is Cytoplasmic. The segment at 300–330 (GRGAEETVEGTKTDRGGSQTEGAQSSDFVTE) is disordered. Positions 302–314 (GAEETVEGTKTDR) are enriched in basic and acidic residues. The segment covering 315–330 (GGSQTEGAQSSDFVTE) has biased composition (polar residues).

It belongs to the G-protein coupled receptor 1 family. As to quaternary structure, interacts with FCN1 (via Fibrinogen C-terminal domain). Detected in whole wall and separated mucosa in the distal ileum and colon. Expressed by enteroendocrine cells expressing peptide YY (PYY) (at protein level).

The protein localises to the cell membrane. G protein-coupled receptor that is activated by a major product of dietary fiber digestion, the short chain fatty acids (SCFAs), and that plays a role in the regulation of whole-body energy homeostasis and in intestinal immunity. In omnivorous mammals, the short chain fatty acids acetate, propionate and butyrate are produced primarily by the gut microbiome that metabolizes dietary fibers. SCFAs serve as a source of energy but also act as signaling molecules. That G protein-coupled receptor is probably coupled to the pertussis toxin-sensitive, G(i/o)-alpha family of G proteins but also to the Gq family. Its activation results in the formation of inositol 1,4,5-trisphosphate, the mobilization of intracellular calcium, the phosphorylation of the MAPK3/ERK1 and MAPK1/ERK2 kinases and the inhibition of intracellular cAMP accumulation. May play a role in glucose homeostasis by regulating the secretion of GLP-1, in response to short-chain fatty acids accumulating in the intestine. May also regulate the production of LEP/Leptin, a hormone acting on the central nervous system to inhibit food intake. Finally, may also regulate whole-body energy homeostasis through adipogenesis regulating both differentiation and lipid storage of adipocytes. In parallel to its role in energy homeostasis, may also mediate the activation of the inflammatory and immune responses by SCFA in the intestine, regulating the rapid production of chemokines and cytokines. May also play a role in the resolution of the inflammatory response and control chemotaxis in neutrophils. In addition to SCFAs, may also be activated by the extracellular lectin FCN1 in a process leading to activation of monocytes and inducing the secretion of interleukin-8/IL-8 in response to the presence of microbes. This chain is Free fatty acid receptor 2 (Ffar2), found in Rattus norvegicus (Rat).